Reading from the N-terminus, the 216-residue chain is 3-isopropylmalate dehydratase small subunit (216 aa).

This sequence belongs to the LeuD family. LeuD type 1 subfamily. Heterodimer of LeuC and LeuD.

The catalysed reaction is (2R,3S)-3-isopropylmalate = (2S)-2-isopropylmalate. Its pathway is amino-acid biosynthesis; L-leucine biosynthesis; L-leucine from 3-methyl-2-oxobutanoate: step 2/4. Functionally, catalyzes the isomerization between 2-isopropylmalate and 3-isopropylmalate, via the formation of 2-isopropylmaleate. This is 3-isopropylmalate dehydratase small subunit from Marinomonas sp. (strain MWYL1).